The chain runs to 192 residues: 3-hydroxyanthranilate 3,4-dioxygenase 1 (192 aa).

Arg50 provides a ligand contact to O2. Fe cation contacts are provided by His54, Glu60, and His102. Substrate is bound at residue Glu60. Substrate is bound by residues Arg106 and Glu116. 4 residues coordinate a divalent metal cation: Cys131, Cys134, Cys168, and Cys171.

This sequence belongs to the 3-HAO family. Fe(2+) is required as a cofactor.

It localises to the cytoplasm. It catalyses the reaction 3-hydroxyanthranilate + O2 = (2Z,4Z)-2-amino-3-carboxymuconate 6-semialdehyde. The protein operates within cofactor biosynthesis; NAD(+) biosynthesis; quinolinate from L-kynurenine: step 3/3. Catalyzes the oxidative ring opening of 3-hydroxyanthranilate to 2-amino-3-carboxymuconate semialdehyde, which spontaneously cyclizes to quinolinate. The sequence is that of 3-hydroxyanthranilate 3,4-dioxygenase 1 (bna1-1) from Aspergillus clavatus (strain ATCC 1007 / CBS 513.65 / DSM 816 / NCTC 3887 / NRRL 1 / QM 1276 / 107).